Here is a 388-residue protein sequence, read N- to C-terminus: G2/mitotic-specific cyclin-B2 (388 aa).

A disordered region spans residues 46–67 (ATNGKVGPSKKPSKASCVQKPK).

Belongs to the cyclin family. Cyclin AB subfamily. In terms of assembly, interacts with the CDK1 protein kinase to form a serine/threonine kinase holoenzyme complex also known as maturation promoting factor (MPF). The cyclin subunit imparts substrate specificity to the complex.

In terms of biological role, essential for the control of the cell cycle at the G2/M (mitosis) transition. This is G2/mitotic-specific cyclin-B2 (ccnb2) from Oryzias curvinotus (Hynann ricefish).